A 385-amino-acid polypeptide reads, in one-letter code: MGIKGLNAIISEHVPSAVRKSEIKNFFGRKVAIDASMSLYQFLIAVRQQDGVQLASESGETTSHLMGIFYRTLRMIDNGIKPCYVFDGKPPVLKSHELSKRSARRATTEEKLKEAVEEAEKLKHERRLVKVTPEHNEEAKKLLRLMGLPYVEAPCEAEAQCAELAKAGKVYAAASEDMDTLCYRTPFLLRHLTFSEAKKEPIHEINTEILLQGLELSIEQFIDLGIMLGCDYCDSIRGVGPVTALKLIKEHKTLENIVEYIESGQANNKWKVPENWPFKEARQLFLDPDVVKGSEVDLKWSEPQEQELVDFMCKEKGFNEERIRSGIKRLQKGLKTGVQGRLDGFFKVKPKNKEQLAAANAKAKSTKAGKQATKGKVGKPGRPRK.

Residues 1–105 (MGIKGLNAII…HELSKRSARR (105 aa)) form an N-domain region. Asp-34 serves as a coordination point for Mg(2+). 2 residues coordinate DNA: Arg-47 and Arg-71. Mg(2+) contacts are provided by Asp-87, Glu-156, Glu-158, Asp-177, and Asp-179. The interval 120-251 (EKLKHERRLV…VTALKLIKEH (132 aa)) is I-domain. Glu-156 contributes to the DNA binding site. 2 residues coordinate DNA: Gly-229 and Asp-231. Residue Asp-231 coordinates Mg(2+). Residues 338-346 (VQGRLDGFF) are interaction with PCNA. A compositionally biased stretch (low complexity) spans 356 to 370 (LAAANAKAKSTKAGK). The segment at 356-385 (LAAANAKAKSTKAGKQATKGKVGKPGRPRK) is disordered. The segment covering 376–385 (KVGKPGRPRK) has biased composition (basic residues).

It belongs to the XPG/RAD2 endonuclease family. FEN1 subfamily. Interacts with PCNA. Three molecules of FEN1 bind to one PCNA trimer with each molecule binding to one PCNA monomer. PCNA stimulates the nuclease activity without altering cleavage specificity. It depends on Mg(2+) as a cofactor. Post-translationally, phosphorylated. Phosphorylation upon DNA damage induces relocalization to the nuclear plasma.

It localises to the nucleus. The protein localises to the nucleolus. Its subcellular location is the nucleoplasm. It is found in the mitochondrion. Its function is as follows. Structure-specific nuclease with 5'-flap endonuclease and 5'-3' exonuclease activities involved in DNA replication and repair. During DNA replication, cleaves the 5'-overhanging flap structure that is generated by displacement synthesis when DNA polymerase encounters the 5'-end of a downstream Okazaki fragment. It enters the flap from the 5'-end and then tracks to cleave the flap base, leaving a nick for ligation. Also involved in the long patch base excision repair (LP-BER) pathway, by cleaving within the apurinic/apyrimidinic (AP) site-terminated flap. Acts as a genome stabilization factor that prevents flaps from equilibrating into structures that lead to duplications and deletions. Also possesses 5'-3' exonuclease activity on nicked or gapped double-stranded DNA, and exhibits RNase H activity. Also involved in replication and repair of rDNA and in repairing mitochondrial DNA. This chain is Flap endonuclease 1, found in Lachancea thermotolerans (strain ATCC 56472 / CBS 6340 / NRRL Y-8284) (Yeast).